Reading from the N-terminus, the 1070-residue chain is DNA-directed RNA polymerase subunit beta (1070 aa).

Belongs to the RNA polymerase beta chain family. In terms of assembly, in plastids the minimal PEP RNA polymerase catalytic core is composed of four subunits: alpha, beta, beta', and beta''. When a (nuclear-encoded) sigma factor is associated with the core the holoenzyme is formed, which can initiate transcription.

Its subcellular location is the plastid. The protein resides in the chloroplast. It catalyses the reaction RNA(n) + a ribonucleoside 5'-triphosphate = RNA(n+1) + diphosphate. In terms of biological role, DNA-dependent RNA polymerase catalyzes the transcription of DNA into RNA using the four ribonucleoside triphosphates as substrates. This chain is DNA-directed RNA polymerase subunit beta, found in Chaetosphaeridium globosum (Charophycean green alga).